A 361-amino-acid polypeptide reads, in one-letter code: D-alanine--D-alanine ligase (361 aa).

Residues 134-344 (KILAQRAGVP…YTDLITKLID (211 aa)) enclose the ATP-grasp domain. ATP is bound at residue 169 to 224 (ASQLGSDLFVKPSNQGSSVGVSHVTNEKEYKVALAEAFKYDDKVLVEETVHGTEVE). Asp297, Glu311, and Asn313 together coordinate Mg(2+).

This sequence belongs to the D-alanine--D-alanine ligase family. Mg(2+) serves as cofactor. It depends on Mn(2+) as a cofactor.

Its subcellular location is the cytoplasm. It catalyses the reaction 2 D-alanine + ATP = D-alanyl-D-alanine + ADP + phosphate + H(+). Its pathway is cell wall biogenesis; peptidoglycan biosynthesis. Its function is as follows. Cell wall formation. This chain is D-alanine--D-alanine ligase, found in Lactobacillus johnsonii (strain CNCM I-12250 / La1 / NCC 533).